Reading from the N-terminus, the 109-residue chain is Photosystem II reaction center Psb28 protein (109 aa).

It belongs to the Psb28 family. As to quaternary structure, part of the photosystem II complex.

Its subcellular location is the plastid. The protein resides in the chloroplast thylakoid membrane. The chain is Photosystem II reaction center Psb28 protein from Cyanidioschyzon merolae (strain NIES-3377 / 10D) (Unicellular red alga).